The following is a 411-amino-acid chain: MSRPAHKTDTIVAVDVLVTSPGRNFVALKITTEQGLVGWGDATLNGRELAVASYLRDHVAPLLIGRDPARIEDTWQYLYRGAYWRRGPVTMTSIGAVDLALWDIKGKATGQPVYQLLGGAVRDRILTYTHASGWEIPQLLDAVDERREQGFLAVRAQSGIPGLATVYGVSSGEAGYEPADRGAAPAVEVWDTDSYLRHAPRVLAAVREHVGPELKLLHDAHHRLTPGQAARLGRALEEVDLYWLEDVTPAENQEVLRHIRHHTTVPLAIGEVFNTVWECQTLITEQLIDFVRTCVTHAGGISHLRRIAALAEVWQVRLGPHGPSDVSPVALAASLHVGLATPNFAIQEYMGYEPVVHEVFRHAWSYADGHLHPGDQPGLGVEVDEALAARFPYEPAYLPIARRRDGSMTDW.

Substrate-binding residues include N45 and H130. The Proton donor/acceptor role is filled by Y167. D219 contacts Mg(2+). Residue H221 is the Proton donor/acceptor of the active site. 2 residues coordinate Mg(2+): E245 and E271. Residues E271, R292, H321, D325, and E348 each coordinate substrate.

This sequence belongs to the mandelate racemase/muconate lactonizing enzyme family. GalD subfamily. Mg(2+) serves as cofactor.

It carries out the reaction D-gluconate = 2-dehydro-3-deoxy-D-gluconate + H2O. Its function is as follows. Has low D-gluconate dehydratase activity (in vitro), suggesting that it has no significant role in D-gluconate degradation in vivo. Has no detectable activity with a panel of 70 other acid sugars (in vitro). The polypeptide is D-galactonate dehydratase family member SBI_01856 (Streptomyces bingchenggensis (strain BCW-1)).